Here is a 198-residue protein sequence, read N- to C-terminus: Pyridoxine/pyridoxamine 5'-phosphate oxidase 2 (198 aa).

Residues arginine 42, 59–60, lysine 66, and 121–122 each bind FMN; these read NT and RS.

This sequence belongs to the pyridoxamine 5'-phosphate oxidase family. Homodimer. The cofactor is FMN.

It carries out the reaction pyridoxamine 5'-phosphate + O2 + H2O = pyridoxal 5'-phosphate + H2O2 + NH4(+). The enzyme catalyses pyridoxine 5'-phosphate + O2 = pyridoxal 5'-phosphate + H2O2. It functions in the pathway cofactor metabolism; pyridoxal 5'-phosphate salvage; pyridoxal 5'-phosphate from pyridoxamine 5'-phosphate: step 1/1. The protein operates within cofactor metabolism; pyridoxal 5'-phosphate salvage; pyridoxal 5'-phosphate from pyridoxine 5'-phosphate: step 1/1. In terms of biological role, catalyzes the oxidation of either pyridoxine 5'-phosphate (PNP) or pyridoxamine 5'-phosphate (PMP) into pyridoxal 5'-phosphate (PLP). Has an in vitro catalytic efficiency for PNP approximately 300-fold lower than that of PPOX1. This is Pyridoxine/pyridoxamine 5'-phosphate oxidase 2 (PPOX2) from Arabidopsis thaliana (Mouse-ear cress).